Consider the following 325-residue polypeptide: 8-oxo-dGDP phosphatase NUDT18 (325 aa).

Residues 38–163 enclose the Nudix hydrolase domain; it reads NVCYIVGAVI…DILSLIDAGL (126 aa). Leucine 55 contributes to the Mg(2+) binding site. The Nudix box signature appears at 73 to 94; the sequence is GRMEECESILEALQREVREEAG.

It belongs to the Nudix hydrolase family. Mn(2+) is required as a cofactor. Requires Mg(2+) as cofactor.

The catalysed reaction is 8-oxo-dGDP + H2O = 8-oxo-dGMP + phosphate + H(+). It carries out the reaction 8-oxo-dADP + H2O = 8-oxo-dAMP + phosphate + H(+). The enzyme catalyses 2-oxo-dADP + H2O = 2-oxo-dAMP + phosphate + H(+). It catalyses the reaction 8-oxo-GDP + H2O = 8-oxo-GMP + phosphate + H(+). Its function is as follows. Mediates the hydrolysis of oxidized nucleoside diphosphate derivatives. Hydrolyzes 8-oxo-7,8-dihydroguanine (8-oxo-Gua)-containing deoxyribo- and ribonucleoside diphosphates to the monophosphates. Hydrolyzes 8-oxo-dGDP and 8-oxo-GDP with the same efficiencies. Also hydrolyzes 8-OH-dADP and 2-OH-dADP. Exhibited no or minimal hydrolysis activity against 8-oxo-dGTP, 8-oxo-GTP, dGTP, GTP, dGDP and GDP. Probably removes oxidized guanine nucleotides from both the DNA and RNA precursor pools. This is 8-oxo-dGDP phosphatase NUDT18 (nudt18) from Danio rerio (Zebrafish).